Here is a 552-residue protein sequence, read N- to C-terminus: DUF724 domain-containing protein 10 (552 aa).

Residues 308–361 (SSLTQGSGDKTEVETQRKTFPKKTLPRNQNGSGNDSTLENENSNRKRKREENLC) are disordered. Polar residues predominate over residues 333–348 (PRNQNGSGNDSTLENE). In terms of domain architecture, DUF724 spans 371–543 (ILFEKKLPVW…LEFQATASAP (173 aa)).

As to expression, expressed at low levels in leaves, stems, flowers and siliques.

In terms of biological role, may be involved in the polar growth of plant cells via transportation of RNAs. This is DUF724 domain-containing protein 10 from Arabidopsis thaliana (Mouse-ear cress).